We begin with the raw amino-acid sequence, 397 residues long: Succinate--CoA ligase [ADP-forming] subunit beta (397 aa).

One can recognise an ATP-grasp domain in the interval 9–254 (KALLRSYGAP…ETEEDPKELA (246 aa)). ATP-binding positions include Lys46, 53–55 (GRG), Glu109, Ser112, and Glu117. Mg(2+) contacts are provided by Asn209 and Asp223. Substrate is bound by residues Asn274 and 331–333 (GIM).

Belongs to the succinate/malate CoA ligase beta subunit family. As to quaternary structure, heterotetramer of two alpha and two beta subunits. The cofactor is Mg(2+).

It carries out the reaction succinate + ATP + CoA = succinyl-CoA + ADP + phosphate. The catalysed reaction is GTP + succinate + CoA = succinyl-CoA + GDP + phosphate. The protein operates within carbohydrate metabolism; tricarboxylic acid cycle; succinate from succinyl-CoA (ligase route): step 1/1. In terms of biological role, succinyl-CoA synthetase functions in the citric acid cycle (TCA), coupling the hydrolysis of succinyl-CoA to the synthesis of either ATP or GTP and thus represents the only step of substrate-level phosphorylation in the TCA. The beta subunit provides nucleotide specificity of the enzyme and binds the substrate succinate, while the binding sites for coenzyme A and phosphate are found in the alpha subunit. This is Succinate--CoA ligase [ADP-forming] subunit beta from Cereibacter sphaeroides (strain ATCC 17025 / ATH 2.4.3) (Rhodobacter sphaeroides).